A 263-amino-acid chain; its full sequence is Phosphatidylglycerol--prolipoprotein diacylglyceryl transferase (263 aa).

A run of 4 helical transmembrane segments spans residues 15–35 (ISIH…VYLA), 52–72 (FILL…VIFQ), 83–103 (IFAI…GAAV), and 112–132 (AIAV…AQSI). Arg-134 is a binding site for a 1,2-diacyl-sn-glycero-3-phospho-(1'-sn-glycerol). Transmembrane regions (helical) follow at residues 170-190 (VPTF…ILGL), 200-220 (GDVT…IEGM), and 227-247 (FVGL…GAVL).

The protein belongs to the Lgt family.

Its subcellular location is the cell membrane. It catalyses the reaction L-cysteinyl-[prolipoprotein] + a 1,2-diacyl-sn-glycero-3-phospho-(1'-sn-glycerol) = an S-1,2-diacyl-sn-glyceryl-L-cysteinyl-[prolipoprotein] + sn-glycerol 1-phosphate + H(+). It functions in the pathway protein modification; lipoprotein biosynthesis (diacylglyceryl transfer). Its function is as follows. Catalyzes the transfer of the diacylglyceryl group from phosphatidylglycerol to the sulfhydryl group of the N-terminal cysteine of a prolipoprotein, the first step in the formation of mature lipoproteins. This chain is Phosphatidylglycerol--prolipoprotein diacylglyceryl transferase, found in Streptococcus thermophilus (strain ATCC BAA-491 / LMD-9).